Here is a 502-residue protein sequence, read N- to C-terminus: Keratin, type II microfibrillar, component 5 (502 aa).

S1 bears the Blocked amino end (Ser) mark. The head stretch occupies residues 1–122 (SCRSYRISPG…PNAQCVKHQE (122 aa)). The 312-residue stretch at 122 to 433 (EKEQIKNLNS…RLLEGEEQRL (312 aa)) folds into the IF rod domain. The coil 1A stretch occupies residues 123–157 (KEQIKNLNSRFAAFIDKVRFLEQQNKLLETKWQFY). The linker 1 stretch occupies residues 158–167 (QNQRCCESNL). The tract at residues 168–268 (EPLFNGYIET…YDEEIQILNA (101 aa)) is coil 1B. K228 participates in a covalent cross-link: Glycyl lysine isopeptide (Lys-Gly) (interchain with G-Cter in SUMO1). Residues 269-285 (HISDTSVIVKMDNSRDL) are linker 12. The segment at 286–429 (NMDCVVAEIK…ATYRRLLEGE (144 aa)) is coil 2. Positions 430 to 502 (EQRLCEGVGS…CGSSRSVRFA (73 aa)) are tail.

The protein belongs to the intermediate filament family. As to expression, hard keratin wool.

In terms of biological role, wool microfibrillar keratin. In Ovis aries (Sheep), this protein is Keratin, type II microfibrillar, component 5.